Here is a 446-residue protein sequence, read N- to C-terminus: Cyclin-F2-2 (446 aa).

A disordered region spans residues 191–216 (YNGDNDAPAPDNSTASRPQLCAPYDD).

The protein belongs to the cyclin family. Cyclin F subfamily.

The sequence is that of Cyclin-F2-2 (CYCF2-2) from Oryza sativa subsp. japonica (Rice).